The following is a 308-amino-acid chain: Pantothenate kinase (308 aa).

Position 90 to 97 (90 to 97 (GSVAVGKS)) interacts with ATP.

Belongs to the prokaryotic pantothenate kinase family.

The protein localises to the cytoplasm. It carries out the reaction (R)-pantothenate + ATP = (R)-4'-phosphopantothenate + ADP + H(+). The protein operates within cofactor biosynthesis; coenzyme A biosynthesis; CoA from (R)-pantothenate: step 1/5. The polypeptide is Pantothenate kinase (Sorangium cellulosum (strain So ce56) (Polyangium cellulosum (strain So ce56))).